Here is a 436-residue protein sequence, read N- to C-terminus: Gamma-glutamyl phosphate reductase (436 aa).

This sequence belongs to the gamma-glutamyl phosphate reductase family.

Its subcellular location is the cytoplasm. It catalyses the reaction L-glutamate 5-semialdehyde + phosphate + NADP(+) = L-glutamyl 5-phosphate + NADPH + H(+). Its pathway is amino-acid biosynthesis; L-proline biosynthesis; L-glutamate 5-semialdehyde from L-glutamate: step 2/2. Functionally, catalyzes the NADPH-dependent reduction of L-glutamate 5-phosphate into L-glutamate 5-semialdehyde and phosphate. The product spontaneously undergoes cyclization to form 1-pyrroline-5-carboxylate. This Prochlorococcus marinus subsp. pastoris (strain CCMP1986 / NIES-2087 / MED4) protein is Gamma-glutamyl phosphate reductase.